A 2957-amino-acid polypeptide reads, in one-letter code: Toxin PAU_02230 (2957 aa).

Residues threonine 949–alanine 968 are disordered. Residues glutamate 2115–lysine 2144 form a membrane localization domain that interacts with the inner leaflet of the plasma membrane region. The tyrosine glycosyltransferase PaToxG stretch occupies residues glutamate 2115–proline 2449. Residues isoleucine 2169 to isoleucine 2171 and serine 2259 to aspartate 2260 contribute to the UDP-N-acetyl-alpha-D-glucosamine site. A divalent metal cation is bound by residues aspartate 2276 and aspartate 2278. The DxDD motif motif lies at aspartate 2276 to aspartate 2279. Residue asparagine 2312 coordinates UDP-N-acetyl-alpha-D-glucosamine. Positions lysine 2450–asparagine 2672 are sseI-like deamidase PaToxD. Residues cysteine 2509, histidine 2547, and aspartate 2562 each act as for deamidase activity in the active site. Residues asparagine 2667–serine 2705 form a disordered region.

The cofactor is a divalent metal cation.

Its subcellular location is the secreted. It localises to the host cell membrane. It carries out the reaction L-tyrosyl-[protein] + UDP-N-acetyl-alpha-D-glucosamine = O-(N-acetyl-alpha-D-glucosaminyl)-L-tyrosyl-[protein] + UDP + H(+). It catalyses the reaction L-glutaminyl-[protein] + H2O = L-glutamyl-[protein] + NH4(+). Functionally, toxin that acts on host cells by modifying Rho proteins by tyrosine GlcNAcylation and heterotrimeric G alpha proteins by deamidation. Catalyzes the mono-O-GlcNAcylation of small GTPases of the Rho family (RhoA, RhoB, RhoC, Rac1, Rac2, Rac3, Cdc42) in eukaryotic host cells at the conserved tyrosine residue located in the switch I region (Tyr-32/34), using UDP-N-acetylglucosamine (UDP-GlcNAc) as the sugar donor; other GTPases of the Rho, Ras or Rab families are not substrates. Tyrosine glycosylation inhibits Rho activation and prevents interaction with downstream effectors, resulting in actin disassembly, inhibition of phagocytosis, cell rounding, and toxicity toward insects and mammalian cells. Also catalyzes the deamidation of the catalytic glutamine in heterotrimeric G alpha proteins (Gi, Gq/11), which blocks GTP hydrolysis and arrests the G proteins in a permanent active state leading to activation of Rho GTPases. Thus, PaTox hijacks host GTPase signaling in a bidirectional manner by deamidation-induced activation and glycosylation-induced inactivation of GTPases. The polypeptide is Toxin PAU_02230 (Photorhabdus asymbiotica subsp. asymbiotica (strain ATCC 43949 / 3105-77) (Xenorhabdus luminescens (strain 2))).